The chain runs to 92 residues: Sugar fermentation stimulation protein B (92 aa).

Positions 50–69 (EMIIAKALGTDPWVIWPSRY) form a DNA-binding region, H-T-H motif.

This sequence belongs to the ner transcriptional regulatory family.

Its function is as follows. This protein is involved in positive regulation of the metabolism of sugars. The protein is Sugar fermentation stimulation protein B (sfsB) of Escherichia coli O157:H7.